A 671-amino-acid polypeptide reads, in one-letter code: Probable potassium transport system protein Kup (671 aa).

The tract at residues 1 to 43 is disordered; that stretch reads MSQIPSPNDPASTGAAPSSAAVPAGPSATPAPSPTAGFSLPGH. Over residues 10 to 37 the composition is skewed to low complexity; sequence PASTGAAPSSAAVPAGPSATPAPSPTAG. The next 12 membrane-spanning stretches (helical) occupy residues 52–72, 92–112, 147–167, 181–201, 209–229, 255–275, 291–311, 323–343, 381–401, 407–427, 441–461, and 465–485; these read LAALAVGALGVVYGDIGTSPL, VLGVLSLVFWAMTFVVTFKYM, LMLGLFGAALLYGDGIITPAI, PAMERAVVPATVVILVFLFLF, VGAVFGPVMLVWFATIAVLGV, GWHGFLVLGGVVLVITGGEAL, WLGLAMPALLLNYLGQGALLL, LLAPEWALYPTIAIATAAAIV, IYLPEVNWMLGTACLALVLGF, LASAYGIAVTGTMIVTTLLFH, AWPLTSLFLTVDASFFLANVV, and DGGWFPIAAAALVFTLMSTWK.

It belongs to the HAK/KUP transporter (TC 2.A.72) family.

Its subcellular location is the cell inner membrane. The enzyme catalyses K(+)(in) + H(+)(in) = K(+)(out) + H(+)(out). Transport of potassium into the cell. Likely operates as a K(+):H(+) symporter. The chain is Probable potassium transport system protein Kup from Anaeromyxobacter sp. (strain K).